The sequence spans 117 residues: Large ribosomal subunit protein uL24 (117 aa).

Belongs to the universal ribosomal protein uL24 family. As to quaternary structure, part of the 50S ribosomal subunit.

One of two assembly initiator proteins, it binds directly to the 5'-end of the 23S rRNA, where it nucleates assembly of the 50S subunit. Its function is as follows. Located at the polypeptide exit tunnel on the outside of the subunit. This Methanothermobacter thermautotrophicus (strain ATCC 29096 / DSM 1053 / JCM 10044 / NBRC 100330 / Delta H) (Methanobacterium thermoautotrophicum) protein is Large ribosomal subunit protein uL24.